We begin with the raw amino-acid sequence, 401 residues long: Ninja-family protein MODD (401 aa).

2 disordered regions span residues 95–135 (KQGV…GEGR) and 215–238 (TGNK…GLPP). Residues 105–130 (RPSGGAEAEPAAARLPASGSPSSGSS) are compositionally biased toward low complexity. A compositionally biased stretch (polar residues) spans 217-226 (NKKTGGNVNH).

This sequence belongs to the Ninja family. Interacts with BZIP46, TPR3 and PUB70.

The protein resides in the nucleus. Acts as a negative regulator of abscisic acid (ABA) signaling and drought tolerance. Mediates deactivation and degradation of BZIP46, a positive regulator of ABA signaling and drought stress tolerance. Represses BZIP46 activity via interaction with the TPR3-HDAC1 corepressor complex and down-regulation of the histone acetylation level at BZIP46 target genes. Promotes BZIP46 degradation via interaction with the U-box type ubiquitin E3 ligase PUB70. The protein is Ninja-family protein MODD of Oryza sativa subsp. japonica (Rice).